Reading from the N-terminus, the 204-residue chain is Sex-determining region Y protein (204 aa).

The tract at residues 59–136 is sufficient for interaction with KPNB1; the sequence is RVKRPMNAFI…YKYRPRRKAK (78 aa). Positions 60-128 form a DNA-binding region, HMG box; the sequence is VKRPMNAFIV…MHREKYPNYK (69 aa). 2 required for nuclear localization regions span residues 61 to 77 and 130 to 136; these read KRPM…QRRK and RPRRKAK. The interval 107–139 is sufficient for interaction with EP300; that stretch reads WPFFQEAQKLQAMHREKYPNYKYRPRRKAKMLP. Lysine 136 bears the N6-acetyllysine mark. The necessary for interaction with ZNF208 isoform KRAB-O stretch occupies residues 138-155; sequence LPKNCSLLPADPASVLCS. The disordered stretch occupies residues 175–204; the sequence is RMEHQLGHLPPINAASSPQQRDRYSHWTKL. Basic and acidic residues predominate over residues 194 to 204; sequence QRDRYSHWTKL. A necessary for interaction with SLC9A3R2 region spans residues 198–204; it reads YSHWTKL.

Belongs to the SRY family. In terms of assembly, interacts with CALM, EP300, HDAC3, KPNB1, ZNF208 isoform KRAB-O, PARP1, SLC9A3R2 and WT1. The interaction with EP300 modulates its DNA-binding activity. The interaction with KPNB1 is sensitive to dissociation by Ran in the GTP-bound form. Interaction with PARP1 impaired its DNA-binding activity. Phosphorylated on serine residues by PKA. Phosphorylation by PKA enhances its DNA-binding activity and stimulates transcription repression. In terms of processing, acetylation of Lys-136 contributes to its nuclear localization and enhances its interaction with KPNB1. Deacetylated by HDAC3. Post-translationally, poly-ADP-ribosylated by PARP1. ADP-ribosylation reduces its DNA-binding activity.

It localises to the nucleus speckle. The protein resides in the cytoplasm. It is found in the nucleus. Its function is as follows. Transcriptional regulator that controls a genetic switch in male development. It is necessary and sufficient for initiating male sex determination by directing the development of supporting cell precursors (pre-Sertoli cells) as Sertoli rather than granulosa cells. Involved in different aspects of gene regulation including promoter activation or repression. Binds to the DNA consensus sequence 5'-[AT]AACAA[AT]-3'. SRY HMG box recognizes DNA by partial intercalation in the minor groove and promotes DNA bending. Also involved in pre-mRNA splicing. In male adult brain involved in the maintenance of motor functions of dopaminergic neurons. In Homo sapiens (Human), this protein is Sex-determining region Y protein.